The primary structure comprises 81 residues: Photosystem I iron-sulfur center (81 aa).

2 consecutive 4Fe-4S ferredoxin-type domains span residues A2–W31 and I39–Y68. [4Fe-4S] cluster is bound by residues C11, C14, C17, C21, C48, C51, C54, and C58.

In terms of assembly, the eukaryotic PSI reaction center is composed of at least 11 subunits. [4Fe-4S] cluster serves as cofactor.

It is found in the plastid. The protein localises to the chloroplast thylakoid membrane. The catalysed reaction is reduced [plastocyanin] + hnu + oxidized [2Fe-2S]-[ferredoxin] = oxidized [plastocyanin] + reduced [2Fe-2S]-[ferredoxin]. In terms of biological role, apoprotein for the two 4Fe-4S centers FA and FB of photosystem I (PSI); essential for photochemical activity. FB is the terminal electron acceptor of PSI, donating electrons to ferredoxin. The C-terminus interacts with PsaA/B/D and helps assemble the protein into the PSI complex. Required for binding of PsaD and PsaE to PSI. PSI is a plastocyanin-ferredoxin oxidoreductase, converting photonic excitation into a charge separation, which transfers an electron from the donor P700 chlorophyll pair to the spectroscopically characterized acceptors A0, A1, FX, FA and FB in turn. The sequence is that of Photosystem I iron-sulfur center from Staurastrum punctulatum (Green alga).